Here is a 549-residue protein sequence, read N- to C-terminus: Glucose-6-phosphate isomerase (549 aa).

Lys-80, Lys-228, and Lys-234 each carry N6-acetyllysine. Glu-355 functions as the Proton donor in the catalytic mechanism. Active-site residues include His-386 and Lys-514.

Belongs to the GPI family.

The protein resides in the cytoplasm. The catalysed reaction is alpha-D-glucose 6-phosphate = beta-D-fructose 6-phosphate. Its pathway is carbohydrate biosynthesis; gluconeogenesis. The protein operates within carbohydrate degradation; glycolysis; D-glyceraldehyde 3-phosphate and glycerone phosphate from D-glucose: step 2/4. Its function is as follows. Catalyzes the reversible isomerization of glucose-6-phosphate to fructose-6-phosphate. In Shigella flexneri serotype 5b (strain 8401), this protein is Glucose-6-phosphate isomerase.